A 311-amino-acid polypeptide reads, in one-letter code: Acetyl-coenzyme A carboxylase carboxyl transferase subunit alpha (311 aa).

The region spanning Glu34–Glu286 is the CoA carboxyltransferase C-terminal domain.

This sequence belongs to the AccA family. In terms of assembly, acetyl-CoA carboxylase is a heterohexamer composed of biotin carboxyl carrier protein (AccB), biotin carboxylase (AccC) and two subunits each of ACCase subunit alpha (AccA) and ACCase subunit beta (AccD).

The protein resides in the cytoplasm. It carries out the reaction N(6)-carboxybiotinyl-L-lysyl-[protein] + acetyl-CoA = N(6)-biotinyl-L-lysyl-[protein] + malonyl-CoA. It participates in lipid metabolism; malonyl-CoA biosynthesis; malonyl-CoA from acetyl-CoA: step 1/1. Its function is as follows. Component of the acetyl coenzyme A carboxylase (ACC) complex. First, biotin carboxylase catalyzes the carboxylation of biotin on its carrier protein (BCCP) and then the CO(2) group is transferred by the carboxyltransferase to acetyl-CoA to form malonyl-CoA. This Nitratiruptor sp. (strain SB155-2) protein is Acetyl-coenzyme A carboxylase carboxyl transferase subunit alpha.